The primary structure comprises 741 residues: Methionine--tRNA ligase (741 aa).

The 'HIGH' region motif lies at 11–21 (PYANGPIHAGH). Residues cysteine 143, cysteine 146, cysteine 156, and cysteine 159 each contribute to the Zn(2+) site. Positions 345–349 (KFSTS) match the 'KMSKS' region motif. Threonine 348 is an ATP binding site. The region spanning 641–741 (EFAKLDLRVG…KEVKLGARIR (101 aa)) is the tRNA-binding domain.

The protein belongs to the class-I aminoacyl-tRNA synthetase family. MetG type 1 subfamily. As to quaternary structure, homodimer. Zn(2+) serves as cofactor.

The protein resides in the cytoplasm. The catalysed reaction is tRNA(Met) + L-methionine + ATP = L-methionyl-tRNA(Met) + AMP + diphosphate. Is required not only for elongation of protein synthesis but also for the initiation of all mRNA translation through initiator tRNA(fMet) aminoacylation. This chain is Methionine--tRNA ligase, found in Thermococcus kodakarensis (strain ATCC BAA-918 / JCM 12380 / KOD1) (Pyrococcus kodakaraensis (strain KOD1)).